The following is a 61-amino-acid chain: Potassium channel toxin alpha-KTx 6.6 (61 aa).

The signal sequence occupies residues 1-23 (MNAKFILLLLVVATTMLLPDTQG). 4 disulfide bridges follow: C29–C50, C35–C55, C39–C57, and C45–C60. The residue at position 60 (C60) is a Cysteine amide.

Belongs to the short scorpion toxin superfamily. Potassium channel inhibitor family. Alpha-KTx 06 subfamily. In terms of tissue distribution, expressed by the venom gland.

The protein resides in the secreted. Functionally, blocker of voltage-gated potassium channels. This is Potassium channel toxin alpha-KTx 6.6 from Opistophthalmus carinatus (African yellow leg scorpion).